The following is a 298-amino-acid chain: Ribosomal RNA small subunit methyltransferase A (298 aa).

S-adenosyl-L-methionine-binding residues include Asn-35, Leu-37, Gly-62, Glu-83, Asp-108, and Asn-133.

The protein belongs to the class I-like SAM-binding methyltransferase superfamily. rRNA adenine N(6)-methyltransferase family. RsmA subfamily.

It localises to the cytoplasm. It catalyses the reaction adenosine(1518)/adenosine(1519) in 16S rRNA + 4 S-adenosyl-L-methionine = N(6)-dimethyladenosine(1518)/N(6)-dimethyladenosine(1519) in 16S rRNA + 4 S-adenosyl-L-homocysteine + 4 H(+). Specifically dimethylates two adjacent adenosines (A1518 and A1519) in the loop of a conserved hairpin near the 3'-end of 16S rRNA in the 30S particle. May play a critical role in biogenesis of 30S subunits. The polypeptide is Ribosomal RNA small subunit methyltransferase A (Streptococcus pyogenes serotype M4 (strain MGAS10750)).